Here is a 374-residue protein sequence, read N- to C-terminus: MPLFATPFAQLDLVRQPEQDGEPLQAFDAADEYLLNQLHERGVTAQCRVLVLNDAFGALAASLAPHVQVTSSGDSHLGFLALRKNLARNGLDLGSVRFVPASETAVGPFDHVLVKVPKTLALLEEQLIRLHGQLAPGAQVVAAGMVKHLPRAAGDLLERYIGPMHASLAVKKARLLIAEAAERPQPRSPYPTRYRLEQPPLTLLNHANVFCREGLDIGTRAFLPHLPRSLGALRAADLGCGNGVLGIAYALLNPQAELTLVDESYMAVQSARENWRAALGERPATFRADDGLAGQAAGSLDLVLCNPPFHQQQVVGDFLAWRMFLQARDALAAGGELWIVGNRHLGYHAKLKRLFRGVEQVAANPKFVILKAGK.

The protein belongs to the methyltransferase superfamily. RlmG family.

Its subcellular location is the cytoplasm. It catalyses the reaction guanosine(1835) in 23S rRNA + S-adenosyl-L-methionine = N(2)-methylguanosine(1835) in 23S rRNA + S-adenosyl-L-homocysteine + H(+). In terms of biological role, specifically methylates the guanine in position 1835 (m2G1835) of 23S rRNA. This is Ribosomal RNA large subunit methyltransferase G from Pseudomonas aeruginosa (strain UCBPP-PA14).